A 311-amino-acid chain; its full sequence is Malate dehydrogenase (311 aa).

NAD(+) contacts are provided by residues 7-13 (GAAGGIG) and aspartate 34. Positions 81 and 87 each coordinate substrate. NAD(+) contacts are provided by residues asparagine 94 and 117 to 119 (ITN). Substrate contacts are provided by asparagine 119 and arginine 153. Histidine 177 (proton acceptor) is an active-site residue. NAD(+) is bound at residue methionine 227.

It belongs to the LDH/MDH superfamily. MDH type 1 family. In terms of assembly, homodimer.

It carries out the reaction (S)-malate + NAD(+) = oxaloacetate + NADH + H(+). Functionally, catalyzes the reversible oxidation of malate to oxaloacetate. The chain is Malate dehydrogenase from Shewanella woodyi (strain ATCC 51908 / MS32).